The sequence spans 404 residues: Sorting nexin-32 (404 aa).

Over residues Met1–Asn10 the composition is skewed to basic and acidic residues. The disordered stretch occupies residues Met1–Val29. Polar residues predominate over residues Glu11–Asp20. A PX domain is found at Leu21–Leu168. Residues Thr255 to Arg336 adopt a coiled-coil conformation.

The protein belongs to the sorting nexin family.

May be involved in several stages of intracellular trafficking. This is Sorting nexin-32 (Snx32) from Mus musculus (Mouse).